The chain runs to 476 residues: Transcription factor HBP-1b(c1) (476 aa).

Disordered stretches follow at residues 1–29 (ESRR…FGAP), 133–159 (HNND…PDID), and 171–207 (QLAA…RKSR). Residues 10 to 25 (AAAAAAAGDPRGPMPG) show a composition bias toward low complexity. Residues 135 to 144 (NDNWGESSMA) are compositionally biased toward polar residues. The segment covering 180-191 (SSDKSRDKLDHK) has biased composition (basic and acidic residues). The bZIP domain maps to 189–252 (DHKSLRRLAQ…SSGDQSQSAS (64 aa)). Residues 191–211 (KSLRRLAQNREAARKSRLRKK) are basic motif. Positions 201 to 242 (EAARKSRLRKKAYIQNLESSRLKLTQLEQELQRARQQGIFIS) form a coiled coil. The interval 217–231 (LESSRLKLTQLEQEL) is leucine-zipper. Residues 256-473 (AVAFDMEYAR…RALSSLWLAR (218 aa)) enclose the DOG1 domain.

This sequence belongs to the bZIP family. Binds DNA as a dimer.

It is found in the nucleus. In terms of biological role, transcriptional activator that binds specifically to the DNA sequence 5'-TGACG-3'. Recognizes ocs elements like the as-1 motif of the cauliflower mosaic virus 35S promoter. Binding to the as-1-like cis elements mediate auxin- and salicylic acid-inducible transcription. Binds to the hexamer motif 5'-ACGTCA-3' of histone gene promoters. This Triticum aestivum (Wheat) protein is Transcription factor HBP-1b(c1).